A 198-amino-acid polypeptide reads, in one-letter code: ATP-dependent Clp protease proteolytic subunit (198 aa).

The Nucleophile role is filled by serine 101. Histidine 126 is a catalytic residue.

This sequence belongs to the peptidase S14 family. Component of the chloroplastic Clp protease core complex.

It localises to the plastid. It is found in the chloroplast stroma. The enzyme catalyses Hydrolysis of proteins to small peptides in the presence of ATP and magnesium. alpha-casein is the usual test substrate. In the absence of ATP, only oligopeptides shorter than five residues are hydrolyzed (such as succinyl-Leu-Tyr-|-NHMec, and Leu-Tyr-Leu-|-Tyr-Trp, in which cleavage of the -Tyr-|-Leu- and -Tyr-|-Trp bonds also occurs).. Its function is as follows. Cleaves peptides in various proteins in a process that requires ATP hydrolysis. Has a chymotrypsin-like activity. Plays a major role in the degradation of misfolded proteins. The sequence is that of ATP-dependent Clp protease proteolytic subunit from Solanum bulbocastanum (Wild potato).